The sequence spans 139 residues: Large ribosomal subunit protein uL22 (139 aa).

The disordered stretch occupies residues 1–22 (MVSENEKTRRPKRSIQHRQNKD). Residues 9-18 (RRPKRSIQHR) are compositionally biased toward basic residues.

It belongs to the universal ribosomal protein uL22 family. In terms of assembly, part of the 50S ribosomal subunit.

Its function is as follows. This protein binds specifically to 23S rRNA; its binding is stimulated by other ribosomal proteins, e.g. L4, L17, and L20. It is important during the early stages of 50S assembly. It makes multiple contacts with different domains of the 23S rRNA in the assembled 50S subunit and ribosome. The globular domain of the protein is located near the polypeptide exit tunnel on the outside of the subunit, while an extended beta-hairpin is found that lines the wall of the exit tunnel in the center of the 70S ribosome. The sequence is that of Large ribosomal subunit protein uL22 from Pseudothermotoga lettingae (strain ATCC BAA-301 / DSM 14385 / NBRC 107922 / TMO) (Thermotoga lettingae).